A 31-amino-acid chain; its full sequence is Diuretic hormone class 2 (31 aa).

Proline 31 is subject to Proline amide.

The protein belongs to the diuretic hormone class 2 family.

It localises to the secreted. Its function is as follows. Regulation of fluid secretion. Stimulates primary urine secretion by Malpighian tubules and causes a dose-dependent stimulation of cAMP levels in the tubules. Has a nonselective effect on Na(+)/K(+) ion transport. In vitro, primarily elevates intracellular Ca(2+). This Apis mellifera (Honeybee) protein is Diuretic hormone class 2.